A 373-amino-acid polypeptide reads, in one-letter code: MEDNNMLPQFIHGILSTSHSLFTRSIQELDEGATTPYDYDDGEPCHKTSVKQIGAWILPPLYSLVFIFGFVGNMLVIIILIGCKKLKSMTDIYLLNLAISDLLFLLTLPFWAHYAANEWVFGNIMCKVFTGLYHIGYFGGIFFIILLTIDRYLAIVHAVFALKARTVTFGVITSVVTWVVAVFASLPGIIFTKSKQDDHHYTCGPYFTQLWKNFQTIMRNILSLILPLLVMVICYSGILHTLFRCRNEKKRHRAVRLIFAIMIVYFLFWTPYNIVLFLTTFQESLGMSNCVIDKHLDQAMQVTETLGMTHCCINPVIYAFVGEKFRRYLSIFFRKHIAKRLCKQCPVFYRETADRVSSTFTPSTGEQEVSVGL.

The Extracellular portion of the chain corresponds to 1–55 (MEDNNMLPQFIHGILSTSHSLFTRSIQELDEGATTPYDYDDGEPCHKTSVKQIGA). A helical transmembrane segment spans residues 56 to 83 (WILPPLYSLVFIFGFVGNMLVIIILIGC). The Cytoplasmic portion of the chain corresponds to 84–93 (KKLKSMTDIY). Residues 94–114 (LLNLAISDLLFLLTLPFWAHY) traverse the membrane as a helical segment. At 115–127 (AANEWVFGNIMCK) the chain is on the extracellular side. Cysteine 126 and cysteine 203 are oxidised to a cystine. The chain crosses the membrane as a helical span at residues 128–149 (VFTGLYHIGYFGGIFFIILLTI). The Cytoplasmic segment spans residues 150–166 (DRYLAIVHAVFALKART). The residue at position 152 (tyrosine 152) is a Phosphotyrosine; by JAK2. The helical transmembrane segment at 167-191 (VTFGVITSVVTWVVAVFASLPGIIF) threads the bilayer. The Extracellular segment spans residues 192 to 219 (TKSKQDDHHYTCGPYFTQLWKNFQTIMR). The chain crosses the membrane as a helical span at residues 220-239 (NILSLILPLLVMVICYSGIL). Residues 240–256 (HTLFRCRNEKKRHRAVR) lie on the Cytoplasmic side of the membrane. Residues 257–281 (LIFAIMIVYFLFWTPYNIVLFLTTF) form a helical membrane-spanning segment. Residues 282–298 (QESLGMSNCVIDKHLDQ) lie on the Extracellular side of the membrane. A helical membrane pass occupies residues 299 to 322 (AMQVTETLGMTHCCINPVIYAFVG). Topologically, residues 323–373 (EKFRRYLSIFFRKHIAKRLCKQCPVFYRETADRVSSTFTPSTGEQEVSVGL) are cytoplasmic.

The protein belongs to the G-protein coupled receptor 1 family. As to quaternary structure, interacts with ARRB1. Interacts (via extracellular N-terminal region) with beta-defensin DEFB106A/DEFB106B; this interaction may preferentially require specific tyrosine sulfation on CCR2. Interacts with NUP85; the interaction is required for CCR2 clusters formation on the cell membrane and CCR2 signaling. In terms of processing, N-glycosylated. Post-translationally, sulfation increases the affinity for both monomeric and dimeric CCL2 with stronger binding to the monomeric form. Binding of sulfated CCR2 to CCL2 promotes conversion of CCL2 from dimer to monomer. Epressed in mature thymocytes. Detected in monocyte/macrophage cell lines, but not in nonhematopoietic cell lines.

Its subcellular location is the cell membrane. Functionally, key functional receptor for CCL2 but can also bind CCL7 and CCL12 chemokines. Its binding with CCL2 on monocytes and macrophages mediates chemotaxis and migration induction through the activation of the PI3K cascade, the small G protein Rac and lamellipodium protrusion. Also acts as a receptor for the beta-defensin DEFB106A/DEFB106B. Regulates the expression of T-cell inflammatory cytokines and T-cell differentiation, promoting the differentiation of T-cells into T-helper 17 cells (Th17) during inflammation. Facilitates the export of mature thymocytes by enhancing directional movement of thymocytes to sphingosine-1-phosphate stimulation and up-regulation of S1P1R expression; signals through the JAK-STAT pathway to regulate FOXO1 activity leading to an increased expression of S1P1R. Plays an important role in mediating peripheral nerve injury-induced neuropathic pain. Increases NMDA-mediated synaptic transmission in both dopamine D1 and D2 receptor-containing neurons, which may be caused by MAPK/ERK-dependent phosphorylation of GRIN2B/NMDAR2B. Mediates the recruitment of macrophages and monocytes to the injury site following brain injury. The protein is C-C chemokine receptor type 2 (Ccr2) of Mus musculus (Mouse).